The chain runs to 440 residues: MTTIQKIYSRSIYDSRGNPTVEVELTTELGTFRSMVPSGASTGEWEAKELRDNDKNKWGGKGVTIAVHNVNNIIGPALVKSDIKITDQRGIDEFMIKLDGTNDKSKLGANSIVGVSMAVARAAAAFLKIPLYEYIGKLAGSKTTECIPVPSFNVLNGGRHAGGDLAFQEFMIMPIKAPTFSEGLRWGSEVYHTLKALAKKKYGASAGNVGDEGGIAPDLTTAEEALDLVNEAIKEAGYDGKVKIGFDVAASELYNGKLYDLDFKSEHPKPENKLDYKKLYEKYSALIEKYPIVFIEDPFSEEDWGAFSYMSSKTKVEVIADDLTVTNVKRLSKAIELKCANALLVKINQIGSLSETIDAANMAKKAGWGLMVSHRSGETDDSFIAHLAVGLEAGQMKSGAPCRSERLAKYNELLRIEDNLGDSAIYAGTRAADYIKSNTL.

Substrate is bound by residues histidine 160 and glutamate 169. Glutamate 212 acts as the Proton donor in catalysis. Residues aspartate 247, glutamate 296, and aspartate 321 each contribute to the Mg(2+) site. Substrate is bound by residues glutamate 296 and aspartate 321. Lysine 346 serves as the catalytic Proton acceptor. Residues 373–376 (SHRS) and lysine 397 contribute to the substrate site.

Belongs to the enolase family. Homodimer. Requires Mg(2+) as cofactor.

Its subcellular location is the cytoplasm. It catalyses the reaction (2R)-2-phosphoglycerate = phosphoenolpyruvate + H2O. It participates in carbohydrate degradation; glycolysis; pyruvate from D-glyceraldehyde 3-phosphate: step 4/5. The sequence is that of Enolase 1-2 (eno102) from Schizosaccharomyces pombe (strain 972 / ATCC 24843) (Fission yeast).